A 117-amino-acid chain; its full sequence is Glycine cleavage system H-like protein (117 aa).

The Lipoyl-binding domain occupies isoleucine 21 to glutamine 103. Position 62 is an N6-lipoyllysine (lysine 62).

Belongs to the GcvH family. It depends on (R)-lipoate as a cofactor.

This Chlamydia trachomatis serovar D (strain ATCC VR-885 / DSM 19411 / UW-3/Cx) protein is Glycine cleavage system H-like protein.